Reading from the N-terminus, the 429-residue chain is Glutamate-1-semialdehyde 2,1-aminomutase 2 (429 aa).

The residue at position 268 (Lys268) is an N6-(pyridoxal phosphate)lysine.

The protein belongs to the class-III pyridoxal-phosphate-dependent aminotransferase family. HemL subfamily. In terms of assembly, homodimer. Requires pyridoxal 5'-phosphate as cofactor.

The protein resides in the cytoplasm. It catalyses the reaction (S)-4-amino-5-oxopentanoate = 5-aminolevulinate. The protein operates within porphyrin-containing compound metabolism; protoporphyrin-IX biosynthesis; 5-aminolevulinate from L-glutamyl-tRNA(Glu): step 2/2. The polypeptide is Glutamate-1-semialdehyde 2,1-aminomutase 2 (Staphylococcus aureus (strain MRSA252)).